Here is a 120-residue protein sequence, read N- to C-terminus: Ribosome-binding factor A (120 aa).

The protein belongs to the RbfA family. In terms of assembly, monomer. Binds 30S ribosomal subunits, but not 50S ribosomal subunits or 70S ribosomes.

The protein resides in the cytoplasm. Functionally, one of several proteins that assist in the late maturation steps of the functional core of the 30S ribosomal subunit. Associates with free 30S ribosomal subunits (but not with 30S subunits that are part of 70S ribosomes or polysomes). Required for efficient processing of 16S rRNA. May interact with the 5'-terminal helix region of 16S rRNA. This chain is Ribosome-binding factor A, found in Clostridium botulinum (strain Okra / Type B1).